The following is a 298-amino-acid chain: tRNA-uridine aminocarboxypropyltransferase 2 (298 aa).

Met1 carries the N-acetylmethionine modification. The segment covering 1–10 has biased composition (basic and acidic residues); it reads MEPQAEERTL. A disordered region spans residues 1–55; it reads MEPQAEERTLGEPAPPPSGALASPTPDEEERTEGGAPPTATPAGASGDSTSADGL. The segment covering 34–45 has biased composition (low complexity); that stretch reads GGAPPTATPAGA. Ser132 bears the Phosphoserine mark. The DXTW signature appears at 178–181; that stretch reads DGTW.

It belongs to the TDD superfamily. DTWD2 family.

It is found in the nucleus. It localises to the cytoplasm. The catalysed reaction is a uridine in tRNA + S-adenosyl-L-methionine = a 3-[(3S)-3-amino-3-carboxypropyl]uridine in tRNA + S-methyl-5'-thioadenosine + H(+). Its function is as follows. Catalyzes the formation of 3-(3-amino-3-carboxypropyl)uridine (acp3U) at position 20a in the D-loop of several cytoplasmic tRNAs (acp3U(20a)). Also has a weak activity to form acp3U at position 20 in the D-loop of tRNAs (acp3U(20)). Involved in glycoRNA biosynthesis by mediating formation of acp3U, which acts as an attachment site for N-glycans on tRNAs. GlycoRNAs consist of RNAs modified with secretory N-glycans that are presented on the cell surface. In Mus musculus (Mouse), this protein is tRNA-uridine aminocarboxypropyltransferase 2.